Here is a 346-residue protein sequence, read N- to C-terminus: MAHHARWTLSQVTELFDKPLLDLLFEAQTIHRQHFDPRQVQVSTLLSIKTGACPEDCKYCPQSSRYKTGLETERLMEVEQVLDSARKAKNAGSTRFCMGAAWKNPHERDMPYLEQMVQGVKAMGLEACMTLGTLDETQAQRLASAGLDYYNHNLDTSPEFYGNIITTRTYQERLDTLDKVRDAGIKVCSGGIVGLGETVKDRAGLLLQLANLPTPPESVPINMLVKVKGTPLADNDDVDAFDFIRTIAVARIMMPTSFVRLSAGREQMNEQTQAMCFMAGANSIFYGCKLLTTPNPEEDKDVQLFRKLGLNPQQTDVMTGDNEQQQKLEEQIFNADTDQFYNAAAL.

The region spanning 38-256 is the Radical SAM core domain; that stretch reads RQVQVSTLLS…IAVARIMMPT (219 aa). Positions 53, 57, and 60 each coordinate [4Fe-4S] cluster. 4 residues coordinate [2Fe-2S] cluster: Cys97, Cys128, Cys188, and Arg260.

The protein belongs to the radical SAM superfamily. Biotin synthase family. As to quaternary structure, homodimer. [4Fe-4S] cluster serves as cofactor. The cofactor is [2Fe-2S] cluster.

It catalyses the reaction (4R,5S)-dethiobiotin + (sulfur carrier)-SH + 2 reduced [2Fe-2S]-[ferredoxin] + 2 S-adenosyl-L-methionine = (sulfur carrier)-H + biotin + 2 5'-deoxyadenosine + 2 L-methionine + 2 oxidized [2Fe-2S]-[ferredoxin]. It participates in cofactor biosynthesis; biotin biosynthesis; biotin from 7,8-diaminononanoate: step 2/2. Its function is as follows. Catalyzes the conversion of dethiobiotin (DTB) to biotin by the insertion of a sulfur atom into dethiobiotin via a radical-based mechanism. This chain is Biotin synthase, found in Pseudescherichia vulneris (Escherichia vulneris).